We begin with the raw amino-acid sequence, 356 residues long: GDP-mannose:di-myo-inositol-1,3'-phosphate beta-1,2-mannosyltransferase (356 aa).

Belongs to the MDIP synthase family. Mg(2+) serves as cofactor.

The catalysed reaction is bis(myo-inositol) 1,3'-phosphate + GDP-alpha-D-mannose = 2-O-(beta-D-mannosyl)-bis(myo-inositol) 1,3'-phosphate + GDP + H(+). The enzyme catalyses 2-O-(beta-D-mannosyl)-bis(myo-inositol) 1,3'-phosphate + GDP-alpha-D-mannose = 2-O-(beta-D-mannosyl-(1-&gt;2)-beta-D-mannosyl)-bis(myo-inositol) 1,3'-phosphate + GDP + H(+). It catalyses the reaction bis(myo-inositol) 1,3'-phosphate + 2 GDP-alpha-D-mannose = 2-O-(beta-D-mannosyl-(1-&gt;2)-beta-D-mannosyl)-bis(myo-inositol) 1,3'-phosphate + 2 GDP + 2 H(+). Its function is as follows. Catalyzes the transfer of the mannosyl group from GDP-mannose to di-myo-inositol-1,3'-phosphate (DIP), producing mannosyl-di-myo-inositol phosphate (MDIP). Can also use MDIP as an acceptor of a second mannose residue, yielding di-mannosyl-di-myo-inositol phosphate (MMDIP). Minor amounts of the tri-mannosylated form are also formed. The sequence is that of GDP-mannose:di-myo-inositol-1,3'-phosphate beta-1,2-mannosyltransferase from Thermotoga maritima (strain ATCC 43589 / DSM 3109 / JCM 10099 / NBRC 100826 / MSB8).